A 363-amino-acid polypeptide reads, in one-letter code: uncharacterized protein (363 aa).

Q198, Y225, E246, and D291 together coordinate S-adenosyl-L-methionine. C318 serves as the catalytic Nucleophile.

This sequence belongs to the class I-like SAM-binding methyltransferase superfamily. RNA M5U methyltransferase family.

This is an uncharacterized protein from Mycoplasma mobile (strain ATCC 43663 / 163K / NCTC 11711) (Mesomycoplasma mobile).